Here is a 422-residue protein sequence, read N- to C-terminus: G-protein coupled receptor 83 (422 aa).

A signal peptide spans 1-16; that stretch reads MGRRGALLCLLPLLRA. The Extracellular portion of the chain corresponds to 17–70; it reads AERPEGRADEPGLEAALAGPNASHFFWSNYSFSDWQNFVGRRRYGAESQNPTVK. Residues Asn-37 and Asn-45 are each glycosylated (N-linked (GlcNAc...) asparagine). The helical transmembrane segment at 71 to 91 threads the bilayer; sequence ALLVVAYSFIIVFSLFGNVLV. The Cytoplasmic portion of the chain corresponds to 92–106; it reads CHVIFKNQRMRSATS. Residues 107 to 128 traverse the membrane as a helical segment; sequence LFIVNLAVADILITLLNTPFTL. At 129–144 the chain is on the extracellular side; that stretch reads VRFVNSTWVFGKGMCH. Asn-133 carries an N-linked (GlcNAc...) asparagine glycan. Residues 145–166 form a helical membrane-spanning segment; it reads VSRFAQYCSLHVSALTLTAIAV. The Cytoplasmic portion of the chain corresponds to 167–185; it reads DRHQVIMHPLKPRISITKG. Residues 186 to 207 traverse the membrane as a helical segment; it reads VIYITVIWTMATFFSLPHAICQ. Topologically, residues 208-237 are extracellular; the sequence is KLFTFKYSEDIVRSLCLPDFPEPADLFWKY. The helical transmembrane segment at 238-259 threads the bilayer; the sequence is LDLATFILLYILPLLIISVAYA. Residues 260–292 are Cytoplasmic-facing; sequence RVAKKLWLCNTIGDVTTEQYLALRRKKKKTIKM. The helical transmembrane segment at 293-314 threads the bilayer; that stretch reads LMLVVVLFALCWFPLNCYVLLL. Topologically, residues 315 to 326 are extracellular; it reads SSKVIHTNNALY. The helical transmembrane segment at 327-347 threads the bilayer; the sequence is FAFHWFAMSSTCYNPFIYCWL. The Cytoplasmic segment spans residues 348–422; that stretch reads NENFRIELKA…SSVEPIVAMS (75 aa).

The protein belongs to the G-protein coupled receptor 1 family.

The protein resides in the cell membrane. Its function is as follows. G-protein coupled receptor for PEN, a neuropeptide produced from the precursor protein, proSAAS (encoded by PCSK1N). Acts through a G(i)- and G(q)-alpha-alpha-mediated pathway in response to PEN. Plays a role in food intake and body weight regulation. May contribute to the regulation of anxiety-related behaviors. In Canis lupus familiaris (Dog), this protein is G-protein coupled receptor 83 (GPR83).